Consider the following 275-residue polypeptide: NH(3)-dependent NAD(+) synthetase (275 aa).

46–53 (GISGGQDS) is an ATP binding site. Position 52 (aspartate 52) interacts with Mg(2+). Arginine 140 contributes to the deamido-NAD(+) binding site. Threonine 160 lines the ATP pocket. Glutamate 165 serves as a coordination point for Mg(2+). The deamido-NAD(+) site is built by lysine 173 and aspartate 180. 2 residues coordinate ATP: lysine 189 and threonine 211. Residue 260–261 (HK) coordinates deamido-NAD(+).

It belongs to the NAD synthetase family. In terms of assembly, homodimer.

It catalyses the reaction deamido-NAD(+) + NH4(+) + ATP = AMP + diphosphate + NAD(+) + H(+). It functions in the pathway cofactor biosynthesis; NAD(+) biosynthesis; NAD(+) from deamido-NAD(+) (ammonia route): step 1/1. Catalyzes the ATP-dependent amidation of deamido-NAD to form NAD. Uses ammonia as a nitrogen source. The polypeptide is NH(3)-dependent NAD(+) synthetase (Shigella dysenteriae serotype 1 (strain Sd197)).